The primary structure comprises 2372 residues: NBAS subunit of NRZ tethering complex (2372 aa).

WD repeat units lie at residues 119–158 and 304–343; these read DPNP…LFII and GEQD…LRGS. A disordered region spans residues 447-468; it reads LESSVKGEEDDGDDDSDSDEEA. Over residues 454 to 467 the composition is skewed to acidic residues; the sequence is EEDDGDDDSDSDEE. The stretch at 629–668 forms a coiled coil; that stretch reads YEDFLSMEEELEQRKERESKKRQELLKKVDFSKLTLEQKE.

The protein resides in the endoplasmic reticulum. Its function is as follows. Involved in Golgi-to-endoplasmic reticulum (ER) retrograde transport; the function is proposed to depend on its association in the NRZ complex which is believed to play a role in SNARE assembly at the ER. Required for normal embryonic development. May play a role in the nonsense-mediated decay pathway of mRNAs containing premature stop codons. The polypeptide is NBAS subunit of NRZ tethering complex (Danio rerio (Zebrafish)).